We begin with the raw amino-acid sequence, 414 residues long: MKKIAYLECPTGIAGDMCLGALIDGGVPLEYLKNQLNRLGIAAEYDLRAETVIRQGQRATKVFVDLKTKATHHDHDHSQDQTHHHHADHAPHRHLPEIQAMIKGAGLPERVERWSLAIFQNLAIAEATVHGTTPEQVHFHEVGATDALVDIVGTCLGLDWLEIDELYCAPMPTGGGTVKAAHGILPVPVPAVLQLWQQRQVPVYSNGIEKELVTPTGAAIATTLATDFCQPPAMTLAKIALGSGTIDLPLPNLLRLWIGHQPETPHLETIVTLETQIDDLNPQAIAYACEKLQAAGALDVFTQGITMKKNRLGTLLTVICPVALVEICEEILFTETSTLGIRRHTQTRSILQRRFETVATPAGEIQLKIGYRGDKIYNVQPEYEDVKAIAQQTGQSWQAIAQQALCQFPRDAES.

A disordered region spans residues 70–91 (ATHHDHDHSQDQTHHHHADHAP).

The protein belongs to the LarC family.

The polypeptide is Putative nickel insertion protein (Picosynechococcus sp. (strain ATCC 27264 / PCC 7002 / PR-6) (Agmenellum quadruplicatum)).